We begin with the raw amino-acid sequence, 247 residues long: ATP synthase subunit a, chloroplastic (247 aa).

Transmembrane regions (helical) follow at residues 38 to 58 (QVLITSWVVIAILLASATLAV), 95 to 115 (VPFIGTMFLFIFVSNWSGALL), 134 to 154 (INTTVALALLTSVAYFYAGLS), 199 to 219 (LVVVVLVSLVPSVVPIPVMFL), and 220 to 240 (GLFTSGIQALIFATLAAAYIG).

It belongs to the ATPase A chain family. As to quaternary structure, F-type ATPases have 2 components, CF(1) - the catalytic core - and CF(0) - the membrane proton channel. CF(1) has five subunits: alpha(3), beta(3), gamma(1), delta(1), epsilon(1). CF(0) has four main subunits: a, b, b' and c.

Its subcellular location is the plastid. It is found in the chloroplast thylakoid membrane. In terms of biological role, key component of the proton channel; it plays a direct role in the translocation of protons across the membrane. The polypeptide is ATP synthase subunit a, chloroplastic (Lactuca sativa (Garden lettuce)).